We begin with the raw amino-acid sequence, 121 residues long: Putative iron-sulfur cluster insertion protein ErpA (121 aa).

The iron-sulfur cluster site is built by C49, C113, and C115.

The protein belongs to the HesB/IscA family. In terms of assembly, homodimer. Requires iron-sulfur cluster as cofactor.

Required for insertion of 4Fe-4S clusters. In Paracidovorax citrulli (strain AAC00-1) (Acidovorax citrulli), this protein is Putative iron-sulfur cluster insertion protein ErpA.